The sequence spans 486 residues: Cardiolipin synthase A (486 aa).

A run of 2 helical transmembrane segments spans residues Thr3 to Val23 and Met38 to Phe58. PLD phosphodiesterase domains are found at residues Met219–Arg246 and Glu399–Ser426. Residues His224, Lys226, Asp231, His404, Lys406, and Asp411 contribute to the active site.

Belongs to the phospholipase D family. Cardiolipin synthase subfamily. ClsA sub-subfamily.

It is found in the cell inner membrane. It catalyses the reaction 2 a 1,2-diacyl-sn-glycero-3-phospho-(1'-sn-glycerol) = a cardiolipin + glycerol. Catalyzes the reversible phosphatidyl group transfer from one phosphatidylglycerol molecule to another to form cardiolipin (CL) (diphosphatidylglycerol) and glycerol. The sequence is that of Cardiolipin synthase A from Yersinia pseudotuberculosis serotype O:1b (strain IP 31758).